The primary structure comprises 204 residues: Ribosomal RNA large subunit methyltransferase E (204 aa).

S-adenosyl-L-methionine-binding residues include glycine 49, tryptophan 51, aspartate 69, asparagine 87, and aspartate 111. Lysine 151 acts as the Proton acceptor in catalysis.

The protein belongs to the class I-like SAM-binding methyltransferase superfamily. RNA methyltransferase RlmE family.

It is found in the cytoplasm. The enzyme catalyses uridine(2552) in 23S rRNA + S-adenosyl-L-methionine = 2'-O-methyluridine(2552) in 23S rRNA + S-adenosyl-L-homocysteine + H(+). Its function is as follows. Specifically methylates the uridine in position 2552 of 23S rRNA at the 2'-O position of the ribose in the fully assembled 50S ribosomal subunit. This is Ribosomal RNA large subunit methyltransferase E from Nitratidesulfovibrio vulgaris (strain ATCC 29579 / DSM 644 / CCUG 34227 / NCIMB 8303 / VKM B-1760 / Hildenborough) (Desulfovibrio vulgaris).